A 675-amino-acid polypeptide reads, in one-letter code: INO80 complex subunit D (675 aa).

Disordered regions lie at residues 1 to 39 (MNNNSNNNNNNNIDQKNETTNEITNNTSNNNNIINNVNQ), 183 to 203 (TGNNNNNTTTTTTTTTTNSTP), 274 to 324 (LKQK…ERQV), 473 to 523 (DSNK…KLNK), and 627 to 675 (VPVT…TMIS). Composition is skewed to low complexity over residues 282 to 318 (QQLQNQKMFEQSQQQDQQQKPVQQPIQQQQQQDQLQI), 482 to 519 (NNDNNINNNNNNNNNNNNNNNNNNNNNNNNNNNNNNNN), and 634 to 648 (NQNNQNNNNNNTNNS). Residues 664-675 (EILKDSDNTMIS) show a composition bias toward basic and acidic residues.

It belongs to the INO80D family. As to quaternary structure, component of the chromatin-remodeling INO80 complex.

The protein localises to the nucleus. Functionally, putative regulatory component of the chromatin remodeling INO80 complex which is involved in transcriptional regulation, DNA replication and probably DNA repair. This Dictyostelium discoideum (Social amoeba) protein is INO80 complex subunit D.